The primary structure comprises 229 residues: Capsid protein (229 aa).

Met-1 carries the post-translational modification N-acetylmethionine; by host. Residues 1–10 show a composition bias toward gly residues; that stretch reads MAQNGTGGGS. A disordered region spans residues 1 to 28; it reads MAQNGTGGGSRRPRRGRRNNNNNNSTAR. A disulfide bridge connects residues Cys-64 and Cys-106.

Belongs to the cucumovirus capsid protein family.

The protein resides in the virion. Its function is as follows. Capsid protein. Probably binds RNA and plays a role in packaging. The chain is Capsid protein from Canna (Florist's daisy).